The primary structure comprises 683 residues: WD repeat-containing protein 48 homolog (683 aa).

WD repeat units follow at residues 27–82, 88–130, 133–167, 176–215, 218–257, 260–299, and 302–343; these read SNRS…PVQY, QHTD…FIDC, THKD…INAN, GCKD…KIMK, GHTD…CIAT, AHEE…KSQL, and KEEA…QLSI. The disordered stretch occupies residues 341 to 364; that stretch reads LSIGGDEDGPSTSNANHSVSASSS. Residues 351–364 are compositionally biased toward low complexity; the sequence is STSNANHSVSASSS. Residues 389–428 form a WD 8 repeat; sequence PGAPAIKKHAMLSDKRHVLTRDSDGNVALYDVLAARKIKD.

The protein belongs to the WD repeat WDR48 family. As to quaternary structure, interacts with usp-46; the interaction increases the catalytic activity of usp-46 in the presence of wdr-20. In terms of tissue distribution, expressed in several head neurons and cells in the tail including the anal depressor cell.

Together with wdr-20, binds to and stimulates the activity of the deubiquitinating enzyme usp-46, leading to deubiquitination and stabilization of the glr-1 glutamate receptor. The polypeptide is WD repeat-containing protein 48 homolog (wdr-48) (Caenorhabditis elegans).